The following is a 301-amino-acid chain: D-alanine--D-alanine ligase (301 aa).

In terms of domain architecture, ATP-grasp spans 99 to 293 (KRILAFGNVR…FEELLDTIIE (195 aa)). Residue 126-181 (IENLGYPVFIKPNNGGSSVATTLVESKEAVKDAVLEALKYDTEVMIEEYIKGDEIT) coordinates ATP. Mg(2+) is bound by residues Asp-248, Glu-260, and Asn-262.

The protein belongs to the D-alanine--D-alanine ligase family. Mg(2+) is required as a cofactor. Requires Mn(2+) as cofactor.

Its subcellular location is the cytoplasm. It catalyses the reaction 2 D-alanine + ATP = D-alanyl-D-alanine + ADP + phosphate + H(+). Its pathway is cell wall biogenesis; peptidoglycan biosynthesis. In terms of biological role, cell wall formation. The protein is D-alanine--D-alanine ligase of Clostridium perfringens (strain SM101 / Type A).